The primary structure comprises 183 residues: MESTLNTTARIGSWSSFISPPLQVCESFKWKLPKATRRVVSVADRQNSNFRWRKVTTGRANVAAEAAARVPTSVPVRVARELAQAGYKHLDVRTPDEFSIGHPSRAINVPYMYRVGSGMVKNPSFLRQVSSHFRKHDEIIIGCESGERSLMASTELLTAGFTGVTDIAGGYVPWTENELPVEE.

The region spanning 83–183 is the Rhodanese domain; the sequence is AQAGYKHLDV…WTENELPVEE (101 aa).

Functionally, is thought to act during the early stages of leaf senescence. The chain is Senescence-associated protein DIN1 (DIN1) from Raphanus sativus (Radish).